Consider the following 1379-residue polypeptide: DNA-directed RNA polymerase subunit beta (1379 aa).

Belongs to the RNA polymerase beta chain family. As to quaternary structure, the RNAP catalytic core consists of 2 alpha, 1 beta, 1 beta' and 1 omega subunit. When a sigma factor is associated with the core the holoenzyme is formed, which can initiate transcription.

The enzyme catalyses RNA(n) + a ribonucleoside 5'-triphosphate = RNA(n+1) + diphosphate. Its function is as follows. DNA-dependent RNA polymerase catalyzes the transcription of DNA into RNA using the four ribonucleoside triphosphates as substrates. The polypeptide is DNA-directed RNA polymerase subunit beta (Allorhizobium ampelinum (strain ATCC BAA-846 / DSM 112012 / S4) (Agrobacterium vitis (strain S4))).